We begin with the raw amino-acid sequence, 279 residues long: Putative pyruvate, phosphate dikinase regulatory protein (279 aa).

153–160 (GVSRTSKT) is a binding site for ADP.

It belongs to the pyruvate, phosphate/water dikinase regulatory protein family. PDRP subfamily.

It carries out the reaction N(tele)-phospho-L-histidyl/L-threonyl-[pyruvate, phosphate dikinase] + ADP = N(tele)-phospho-L-histidyl/O-phospho-L-threonyl-[pyruvate, phosphate dikinase] + AMP + H(+). The enzyme catalyses N(tele)-phospho-L-histidyl/O-phospho-L-threonyl-[pyruvate, phosphate dikinase] + phosphate + H(+) = N(tele)-phospho-L-histidyl/L-threonyl-[pyruvate, phosphate dikinase] + diphosphate. In terms of biological role, bifunctional serine/threonine kinase and phosphorylase involved in the regulation of the pyruvate, phosphate dikinase (PPDK) by catalyzing its phosphorylation/dephosphorylation. The polypeptide is Putative pyruvate, phosphate dikinase regulatory protein (Rhodopseudomonas palustris (strain BisB5)).